We begin with the raw amino-acid sequence, 156 residues long: Ribosome maturation factor RimP (156 aa).

This sequence belongs to the RimP family.

The protein localises to the cytoplasm. Functionally, required for maturation of 30S ribosomal subunits. The polypeptide is Ribosome maturation factor RimP (Exiguobacterium sp. (strain ATCC BAA-1283 / AT1b)).